Reading from the N-terminus, the 184-residue chain is ATP synthase subunit b, chloroplastic (184 aa).

A helical transmembrane segment spans residues 27 to 49 (LATNPINLSVVLGVLIFFGKGVL).

This sequence belongs to the ATPase B chain family. F-type ATPases have 2 components, F(1) - the catalytic core - and F(0) - the membrane proton channel. F(1) has five subunits: alpha(3), beta(3), gamma(1), delta(1), epsilon(1). F(0) has four main subunits: a(1), b(1), b'(1) and c(10-14). The alpha and beta chains form an alternating ring which encloses part of the gamma chain. F(1) is attached to F(0) by a central stalk formed by the gamma and epsilon chains, while a peripheral stalk is formed by the delta, b and b' chains.

It localises to the plastid. The protein localises to the chloroplast thylakoid membrane. In terms of biological role, f(1)F(0) ATP synthase produces ATP from ADP in the presence of a proton or sodium gradient. F-type ATPases consist of two structural domains, F(1) containing the extramembraneous catalytic core and F(0) containing the membrane proton channel, linked together by a central stalk and a peripheral stalk. During catalysis, ATP synthesis in the catalytic domain of F(1) is coupled via a rotary mechanism of the central stalk subunits to proton translocation. Functionally, component of the F(0) channel, it forms part of the peripheral stalk, linking F(1) to F(0). The sequence is that of ATP synthase subunit b, chloroplastic from Cucumis sativus (Cucumber).